The primary structure comprises 171 residues: MTSLLITGYKSFELGVFKDKDPKVNIIKKAIKRDLKRFLDEGVDWMIFTGNLGFEFWALEVAKELQKDYPLRLATLFPFKTHGQNWSEANQEKLAAFKQVDFVKYSFPAYQSPAQFKQFNQFLIDNTDQAYLFYEPENETNLKYFYNMIIAASDYPLFRLTFDDLNEVMSE.

The protein belongs to the UPF0398 family.

In Streptococcus thermophilus (strain ATCC BAA-250 / LMG 18311), this protein is UPF0398 protein stu0232.